The chain runs to 512 residues: Probable capsid protein 4 (512 aa).

The protein belongs to the NCLDV major capsid protein family.

The protein localises to the virion. The chain is Probable capsid protein 4 from Acanthamoeba polyphaga mimivirus (APMV).